The following is a 234-amino-acid chain: Lipoprotein-releasing system ATP-binding protein LolD (234 aa).

In terms of domain architecture, ABC transporter spans 7 to 234 (LLCNNLCKKY…QDELTVTGAL (228 aa)). Position 43–50 (43–50 (GSSGSGKS)) interacts with ATP.

Belongs to the ABC transporter superfamily. Lipoprotein translocase (TC 3.A.1.125) family. As to quaternary structure, the complex is composed of two ATP-binding proteins (LolD) and two transmembrane proteins (LolC and LolE).

It localises to the cell inner membrane. Its function is as follows. Part of the ABC transporter complex LolCDE involved in the translocation of mature outer membrane-directed lipoproteins, from the inner membrane to the periplasmic chaperone, LolA. Responsible for the formation of the LolA-lipoprotein complex in an ATP-dependent manner. The sequence is that of Lipoprotein-releasing system ATP-binding protein LolD from Photorhabdus laumondii subsp. laumondii (strain DSM 15139 / CIP 105565 / TT01) (Photorhabdus luminescens subsp. laumondii).